Here is a 283-residue protein sequence, read N- to C-terminus: MFS-type transporter eupM (283 aa).

The next 7 helical transmembrane spans lie at 68–88, 111–131, 136–156, 165–185, 196–216, 227–247, and 263–283; these read LVAW…WGAM, IAWI…VAGP, GGFK…YMML, VLLA…TPMI, IGLA…VYPI, FAWT…IPII, and LIDL…ATMI.

The protein belongs to the major facilitator superfamily. Monocarboxylate porter (TC 2.A.1.13) family.

It localises to the membrane. Its function is as follows. MFS-type transporter; part of the gene cluster that mediates the biosynthesis of eupenifeldin, a bistropolone meroterpenoid that acts as an antitumor agent. The polypeptide is MFS-type transporter eupM (Phoma sp).